We begin with the raw amino-acid sequence, 329 residues long: GTPase Obg (329 aa).

The Obg domain occupies 1 to 159 (MQFIDQARIT…WLLHLELKLL (159 aa)). In terms of domain architecture, OBG-type G spans 160–328 (AEVGIIGLPN…LLNKIWSKLE (169 aa)). Residues 166-173 (GLPNAGKS), 191-195 (FTTLI), 213-216 (DIPG), 280-283 (NKKE), and 309-311 (SAI) contribute to the ATP site. Serine 173 and threonine 193 together coordinate Mg(2+).

The protein belongs to the TRAFAC class OBG-HflX-like GTPase superfamily. OBG GTPase family. Monomer. Mg(2+) is required as a cofactor.

The protein resides in the cytoplasm. An essential GTPase which binds GTP, GDP and possibly (p)ppGpp with moderate affinity, with high nucleotide exchange rates and a fairly low GTP hydrolysis rate. Plays a role in control of the cell cycle, stress response, ribosome biogenesis and in those bacteria that undergo differentiation, in morphogenesis control. This Prochlorococcus marinus (strain SARG / CCMP1375 / SS120) protein is GTPase Obg.